Here is a 261-residue protein sequence, read N- to C-terminus: Zinc finger protein 664 (261 aa).

9 C2H2-type zinc fingers span residues 3–25 (YKCPMCREFFSERADLFMHQKIH), 31–53 (HKCDKCDKGFFHISELHIHWRDH), 59–81 (YKCDDCGKDFSTTTKLNRHKKIH), 87–109 (YKCYECGKAFNWSSHLQIHMRVH), 115–137 (YVCSECGRGFSNSSNLCMHQRVH), 143–165 (FKCEECGKAFRHTSSLCMHQRVH), 171–193 (YKCYECGKAFSQSSSLCIHQRVH), 199–221 (YRCCGCGKAFSQSSSLCIHQRVH), and 227–249 (FKCDECGKAFSQSTSLCIHQRVH). A Glycyl lysine isopeptide (Lys-Gly) (interchain with G-Cter in SUMO2) cross-link involves residue Lys257.

The protein belongs to the krueppel C2H2-type zinc-finger protein family.

It is found in the nucleus. Functionally, may be involved in transcriptional regulation. The protein is Zinc finger protein 664 of Homo sapiens (Human).